A 224-amino-acid polypeptide reads, in one-letter code: Large ribosomal subunit protein uL3 (224 aa).

Glutamine 159 bears the N5-methylglutamine mark.

It belongs to the universal ribosomal protein uL3 family. Part of the 50S ribosomal subunit. Forms a cluster with proteins L14 and L19. Post-translationally, methylated by PrmB.

Its function is as follows. One of the primary rRNA binding proteins, it binds directly near the 3'-end of the 23S rRNA, where it nucleates assembly of the 50S subunit. The sequence is that of Large ribosomal subunit protein uL3 from Herminiimonas arsenicoxydans.